The sequence spans 185 residues: Protein TIFY 5 (185 aa).

The Tify domain maps to 38–72; that stretch reads AAEARRNLTIFYNGRMCAVNVTELQARTIISMASQ. Residues 77 to 185 are disordered; sequence KQQQQQIQGR…RAAAPLYARR (109 aa). Residues 137-157 are compositionally biased toward low complexity; the sequence is PRAGLQAAAAAAPTMNQPPAA. A Jas motif is present at residues 155–182; it reads PAASGLSMKRSLQRFLEKRKTRAAAPLY. The Nuclear localization signal motif lies at 162-169; that stretch reads MKRSLQRF.

It belongs to the TIFY/JAZ family. In terms of processing, ubiquitinated. Targeted for degradation by the SCF(COI1) E3 ubiquitin ligase-proteasome pathway during jasmonate signaling.

The protein localises to the nucleus. Functionally, repressor of jasmonate responses. The protein is Protein TIFY 5 of Oryza sativa subsp. indica (Rice).